Consider the following 447-residue polypeptide: Transducin beta-like protein 2 (447 aa).

The segment at 38 to 72 (RSGRPACQKANGFPPDKSSGSKKQKQYQRIRKEKP) is disordered. Basic residues predominate over residues 57–69 (GSKKQKQYQRIRK). 7 WD repeats span residues 88-127 (SHSG…QREH), 134-174 (VELD…DGGY), 186-226 (KHKA…STIN), 228-267 (NQMN…GEFQ), 277-316 (GHSA…KKKQ), 329-367 (AAGA…KEEC), and 371-409 (VHGE…RAMV). K168 is covalently cross-linked (Glycyl lysine isopeptide (Lys-Gly) (interchain with G-Cter in SUMO2)). T433 carries the phosphothreonine; by ATM or ATR modification.

The sequence is that of Transducin beta-like protein 2 (TBL2) from Homo sapiens (Human).